The primary structure comprises 88 residues: Small ribosomal subunit protein bS16c (88 aa).

Belongs to the bacterial ribosomal protein bS16 family.

The protein localises to the plastid. It is found in the chloroplast. The polypeptide is Small ribosomal subunit protein bS16c (Atropa belladonna (Belladonna)).